A 293-amino-acid chain; its full sequence is Heterogeneous nuclear ribonucleoprotein C-like 1 (293 aa).

One can recognise an RRM domain in the interval 16 to 87 (SRVFIGNLNT…QVVDINLAAE (72 aa)). 2 disordered regions span residues 137–177 (ALAV…KLKG) and 206–293 (KEQS…QDDS). Residues 177-225 (GDDLQAIKQELTQIKQKVDSLLENLEKIEKEQSKQEVEVKNAKSEEEQS) adopt a coiled-coil conformation. Composition is skewed to basic and acidic residues over residues 206–222 (KEQSKQEVEVKNAKSEE) and 229–240 (MKKDETHVKMES). 2 stretches are compositionally biased toward acidic residues: residues 242 to 267 (GGAEDSAEEGDPLDDDVNEDQGDDQL) and 275 to 284 (KEAEEGEDDR).

The protein belongs to the RRM HNRPC family. RALY subfamily.

Its subcellular location is the nucleus. May play a role in nucleosome assembly by neutralizing basic proteins such as A and B core hnRNPs. This Homo sapiens (Human) protein is Heterogeneous nuclear ribonucleoprotein C-like 1 (HNRNPCL1).